The sequence spans 257 residues: Hydroxyacylglutathione hydrolase (257 aa).

Histidine 58, histidine 60, aspartate 62, histidine 63, histidine 116, aspartate 135, and histidine 173 together coordinate Zn(2+).

It belongs to the metallo-beta-lactamase superfamily. Glyoxalase II family. As to quaternary structure, monomer. Zn(2+) serves as cofactor.

It carries out the reaction an S-(2-hydroxyacyl)glutathione + H2O = a 2-hydroxy carboxylate + glutathione + H(+). It participates in secondary metabolite metabolism; methylglyoxal degradation; (R)-lactate from methylglyoxal: step 2/2. Functionally, thiolesterase that catalyzes the hydrolysis of S-D-lactoyl-glutathione to form glutathione and D-lactic acid. The protein is Hydroxyacylglutathione hydrolase of Brucella melitensis biotype 1 (strain ATCC 23456 / CCUG 17765 / NCTC 10094 / 16M).